Reading from the N-terminus, the 250-residue chain is 23S rRNA (guanosine-2'-O-)-methyltransferase RlmB (250 aa).

Residues glycine 197, isoleucine 217, and methionine 226 each contribute to the S-adenosyl-L-methionine site.

It belongs to the class IV-like SAM-binding methyltransferase superfamily. RNA methyltransferase TrmH family. RlmB subfamily.

The protein localises to the cytoplasm. It carries out the reaction guanosine(2251) in 23S rRNA + S-adenosyl-L-methionine = 2'-O-methylguanosine(2251) in 23S rRNA + S-adenosyl-L-homocysteine + H(+). Its function is as follows. Specifically methylates the ribose of guanosine 2251 in 23S rRNA. This is 23S rRNA (guanosine-2'-O-)-methyltransferase RlmB from Neisseria meningitidis serogroup B (strain ATCC BAA-335 / MC58).